A 640-amino-acid chain; its full sequence is Zinc finger and BTB domain-containing protein 22 (640 aa).

In terms of domain architecture, BTB spans 57–121 (CDVSIRVQGR…AYTGRLSMAA (65 aa)). Disordered stretches follow at residues 191-244 (RSHA…PVFP), 308-327 (PAPA…EEED), and 332-482 (CEDD…GGTG). The segment covering 192-210 (SHASSRASENQSPSSSNYF) has biased composition (polar residues). S203 carries the post-translational modification Phosphoserine. A compositionally biased stretch (acidic residues) spans 318 to 327 (PDLEEDEEED). Positions 431–442 (SSSSSSSSSSSS) are enriched in low complexity. The span at 469–482 (GMPGGPGGTPGGTG) shows a compositional bias: gly residues. The segment at 490–511 (FLCHCGKAFSHKSMRDRHVNMH) adopts a C2H2-type 1; atypical zinc-finger fold. 2 consecutive C2H2-type zinc fingers follow at residues 517 to 539 (FDCP…MKTH) and 545 to 571 (YECG…ERRH). A disordered region spans residues 571–640 (HRLVGGGGGG…MGFGGGGGTN (70 aa)). Positions 574–588 (VGGGGGGGPGPGGPT) are enriched in gly residues.

It belongs to the krueppel C2H2-type zinc-finger protein family.

Its subcellular location is the nucleus. Functionally, may be involved in transcriptional regulation. The chain is Zinc finger and BTB domain-containing protein 22 (ZBTB22) from Canis lupus familiaris (Dog).